The chain runs to 154 residues: MGLSEAEWQLVLHVWAKVEADLSGHGQEILIRLFKGHPETLEKFDKFKHLKSEAEMKASEDLKKHGHTVLTALGGILKKKGHHEAELKPLAQSHATKHKIPIKYLEFISDAIIHVLHSRHPSDFGADAQAAMTKALELFRKDIAAKYKELGFHG.

Residues 2-148 (GLSEAEWQLV…FRKDIAAKYK (147 aa)) enclose the Globin domain. At Ser4 the chain carries Phosphoserine. Residue His65 coordinates nitrite. His65 provides a ligand contact to O2. Residue Thr68 is modified to Phosphothreonine. His94 is a binding site for heme b.

The protein belongs to the globin family. Monomeric.

It localises to the cytoplasm. The protein resides in the sarcoplasm. The catalysed reaction is Fe(III)-heme b-[protein] + nitric oxide + H2O = Fe(II)-heme b-[protein] + nitrite + 2 H(+). It carries out the reaction H2O2 + AH2 = A + 2 H2O. Monomeric heme protein which primary function is to store oxygen and facilitate its diffusion within muscle tissues. Reversibly binds oxygen through a pentacoordinated heme iron and enables its timely and efficient release as needed during periods of heightened demand. Depending on the oxidative conditions of tissues and cells, and in addition to its ability to bind oxygen, it also has a nitrite reductase activity whereby it regulates the production of bioactive nitric oxide. Under stress conditions, like hypoxia and anoxia, it also protects cells against reactive oxygen species thanks to its pseudoperoxidase activity. The protein is Myoglobin (MB) of Ziphius cavirostris (Cuvier's beaked whale).